The primary structure comprises 2313 residues: Cell surface glycoprotein 1 (2313 aa).

The N-terminal stretch at 1–28 is a signal peptide; sequence MKRKNKVLSILLTLLLIISTTSVNMSFA. 2 consecutive Cohesin domains span residues 34-197 and 205-367; these read IEMV…VVEA and VALE…EIVV. Acidic residues predominate over residues 369 to 378; that stretch reads GEEPGEEPTE. The tract at residues 369-400 is disordered; that stretch reads GEEPGEEPTEEPVPTETSVDPTPTVTEEPVPS. Positions 380-400 are enriched in low complexity; the sequence is PVPTETSVDPTPTVTEEPVPS. The Cohesin 3 domain maps to 407–569; that stretch reads VIMELDKTKV…SVVQPGEIVV (163 aa). A compositionally biased stretch (acidic residues) spans 571–580; it reads GEEPGEEPTE. A disordered region spans residues 571–602; it reads GEEPGEEPTEEPVPTETSVDPTPTVTEEPVPS. Low complexity predominate over residues 582–602; sequence PVPTETSVDPTPTVTEEPVPS. A Cohesin 4 domain is found at 609–771; it reads VIMELDKTKV…SVVQPGEIVA (163 aa). A compositionally biased stretch (acidic residues) spans 772–782; the sequence is EGEEPGEEPTE. Positions 772–805 are disordered; it reads EGEEPGEEPTEEPVPTETSADPTPTVTEEPVPSE. A compositionally biased stretch (low complexity) spans 784–803; it reads PVPTETSADPTPTVTEEPVP. One can recognise a Cohesin 5 domain in the interval 811 to 973; that stretch reads VIMELDKTKV…SVVQPGEIVA (163 aa). Residues 974–984 are compositionally biased toward acidic residues; that stretch reads EGEEPGEEPTE. The interval 974–1007 is disordered; sequence EGEEPGEEPTEEPVPTETPVDPTPTVTEEPVPSE. Residues 986–1007 are compositionally biased toward low complexity; sequence PVPTETPVDPTPTVTEEPVPSE. The Cohesin 6 domain maps to 1013–1175; sequence VIMELDKTKV…SVVQPGEIVA (163 aa). 2 disordered regions span residues 1177-1203 and 1374-2111; these read GEEP…EPVP and ASDE…PDGS. A compositionally biased stretch (low complexity) spans 1184 to 1203; sequence PVPTETPVDPTPTVTEEPVP. The 165-residue stretch at 1211–1375 folds into the Cohesin 7 domain; the sequence is VIMELDKTKV…IQPAPIKAAS (165 aa). Positions 1376-1390 are enriched in low complexity; it reads DEPIPTDTPSDEPTP. The approximate tandem repeats of T-P-S-D-E-P stretch occupies residues 1383–2025; sequence TPSDEPTPSD…SDEPTPSETP (643 aa). Pro residues predominate over residues 1391-1411; the sequence is SDEPTPSDEPTPSDEPTPSDE. Residues 1423–1433 are compositionally biased toward low complexity; it reads PTDTPSDEPTP. Residues 1434-1454 are compositionally biased toward pro residues; that stretch reads SDEPTPSDEPTPSDEPTPSDE. The segment covering 1466-1476 has biased composition (low complexity); the sequence is PTDTPSDEPTP. A compositionally biased stretch (pro residues) spans 1477–1497; it reads SDEPTPSDEPTPSDEPTPSDE. Residues 1509-1519 show a composition bias toward low complexity; it reads PTDTPSDEPTP. Pro residues predominate over residues 1520–1540; sequence SDEPTPSDEPTPSDEPTPSDE. The segment covering 1552 to 1562 has biased composition (low complexity); that stretch reads PTDTPSDEPTP. A compositionally biased stretch (pro residues) spans 1563–1595; it reads SDEPTPSDEPTPSDEPTPSDEPTPSDEPTPSDE. Residues 1607–1617 are compositionally biased toward low complexity; sequence PTDTPSDEPTP. Residues 1618 to 1650 show a composition bias toward pro residues; sequence SDEPTPSDEPTPSDEPTPSDEPTPSDEPTPSDE. A compositionally biased stretch (low complexity) spans 1662–1672; sequence PTDTPSDEPTP. A compositionally biased stretch (pro residues) spans 1673-1693; it reads SDEPTPSDEPTPSDEPTPSDE. Residues 1705–1715 show a composition bias toward low complexity; the sequence is PTDTPSDEPTP. The span at 1716-1736 shows a compositional bias: pro residues; it reads SDEPTPSDEPTPSDEPTPSDE. A compositionally biased stretch (low complexity) spans 1748–1758; the sequence is PTDTPSDEPTP. Over residues 1759–1779 the composition is skewed to pro residues; sequence SDEPTPSDEPTPSDEPTPSDE. The span at 1791–1801 shows a compositional bias: low complexity; the sequence is PTDTPSDEPTP. Pro residues predominate over residues 1802-1822; the sequence is SDEPTPSDEPTPSDEPTPSDE. Low complexity predominate over residues 1834–1844; sequence PTDTPSDEPTP. Over residues 1845–1865 the composition is skewed to pro residues; that stretch reads SDEPTPSDEPTPSDEPTPSDE. The span at 1877 to 1887 shows a compositional bias: low complexity; that stretch reads PTDTPSDEPTP. A compositionally biased stretch (pro residues) spans 1888–1908; that stretch reads SDEPTPSDEPTPSDEPTPSDE. Residues 1920–1930 show a composition bias toward low complexity; sequence PTDTPSDEPTP. A compositionally biased stretch (pro residues) spans 1931–1963; sequence SDEPTPSDEPTPSDEPTPSDEPTPSDEPTPSDE. Residues 1975-1985 show a composition bias toward low complexity; the sequence is PTDTPSDEPTP. Composition is skewed to pro residues over residues 1986-2018 and 2027-2039; these read SDEP…PSDE and EPTP…PTPS. A compositionally biased stretch (gly residues) spans 2045-2062; sequence GSGGSGGSGGGGGGGGGT. SLH domains are found at residues 2067 to 2140, 2141 to 2204, and 2211 to 2274; these read PTPT…YGAQ, SASP…EIMS, and ISNP…GAPK. The span at 2073-2082 shows a compositional bias: low complexity; it reads SKPTSTPAPT.

Assembled into mono-layered crystalline arrays.

The protein resides in the secreted. It is found in the cell wall. It localises to the S-layer. The protein is Cell surface glycoprotein 1 (olpB) of Acetivibrio thermocellus (strain ATCC 27405 / DSM 1237 / JCM 9322 / NBRC 103400 / NCIMB 10682 / NRRL B-4536 / VPI 7372) (Clostridium thermocellum).